The sequence spans 262 residues: tRNA pseudouridine synthase A (262 aa).

Asp51 (nucleophile) is an active-site residue. Tyr106 lines the substrate pocket.

Belongs to the tRNA pseudouridine synthase TruA family.

It catalyses the reaction uridine(38/39/40) in tRNA = pseudouridine(38/39/40) in tRNA. Functionally, formation of pseudouridine at positions 38, 39 and 40 in the anticodon stem and loop of transfer RNAs. This Pyrococcus horikoshii (strain ATCC 700860 / DSM 12428 / JCM 9974 / NBRC 100139 / OT-3) protein is tRNA pseudouridine synthase A.